Reading from the N-terminus, the 331-residue chain is D-lactate dehydrogenase (331 aa).

NAD(+)-binding positions include 155–156 (HI), Asp-175, 206–207 (VP), Asn-212, 233–235 (AAR), and Asp-259. Arg-235 is a catalytic residue. Residue Glu-264 is part of the active site. Residue His-296 is the Proton donor of the active site.

Belongs to the D-isomer specific 2-hydroxyacid dehydrogenase family. As to quaternary structure, homodimer.

It carries out the reaction (R)-lactate + NAD(+) = pyruvate + NADH + H(+). The polypeptide is D-lactate dehydrogenase (Leuconostoc mesenteroides subsp. cremoris).